Here is a 194-residue protein sequence, read N- to C-terminus: Lectin-C (194 aa).

An N-terminal signal peptide occupies residues 1 to 26; it reads MKRSNSIAVMLVLVLSSLMLLLPVEG. Residues 27-44 constitute a propeptide, removed in mature form; that stretch reads QGHEGHGVGEILLMGKLG. Chitin-binding type-1 domains lie at 45–86, 87–127, and 128–168; these read APVC…QCDY, NRCG…QCSY, and WRCG…QCDL. Intrachain disulfides connect cysteine 48-cysteine 63, cysteine 57-cysteine 69, cysteine 62-cysteine 76, cysteine 80-cysteine 84, cysteine 89-cysteine 104, cysteine 98-cysteine 110, cysteine 103-cysteine 117, cysteine 121-cysteine 125, cysteine 130-cysteine 145, cysteine 139-cysteine 151, cysteine 144-cysteine 158, and cysteine 162-cysteine 166. Positions 171–194 are cleaved as a propeptide — removed in mature form; that stretch reads LLPSPLRRIIAIRKLKANLANMLS.

Homodimer. The homodimers are asymmetric; formed in a 'head-to-tail' fashion via hydrophobic interactions between aromatic residues of the carbohydrate-binding sites of each subunit.

Functionally, N-acetyl-D-glucosamine binding lectin. Almost no hemagglutinating activity towards human erythrocytes. Low mitogenic activity towards human peripheral blood lymphocytes. This Phytolacca americana (American pokeweed) protein is Lectin-C.